A 415-amino-acid chain; its full sequence is Krueppel-like factor 15 (415 aa).

The 9aaTAD motif lies at 75–83; that stretch reads SILDFLLSR. Positions 172–216 are disordered; the sequence is LSAGSHRSHLHPESAGRERCTPPPGGTSGGGAQSAGEGPAHDGPV. The segment covering 181 to 191 has biased composition (basic and acidic residues); that stretch reads LHPESAGRERC. 3 C2H2-type zinc fingers span residues 320-344, 350-374, and 380-402; these read HKCT…LRRH, FACT…RRSH, and YQCP…IKVH.

It belongs to the Sp1 C2H2-type zinc-finger protein family. In terms of assembly, interacts with MYOCD. Interacts with EP300. As to expression, expressed in aortic smooth muscle cells.

The protein resides in the nucleus. In terms of biological role, transcriptional regulator that binds to the GA element of the CLCNKA promoter. Binds to the KCNIP2 promoter and regulates KCNIP2 circadian expression in the heart. Is a repressor of CCN2 expression, involved in the control of cardiac fibrosis. Is also involved in the control of cardiac hypertrophy acting through the inhibition of MEF2A, GATA4 and MYOCD activity. Is a negative regulator of TP53 acetylation. Inhibits NF-kappa-B activation through repression of EP300-dependent RELA acetylation. Involved in podocyte differentiation. The polypeptide is Krueppel-like factor 15 (Klf15) (Mus musculus (Mouse)).